The following is a 479-amino-acid chain: Proline--tRNA ligase 2 (479 aa).

The protein belongs to the class-II aminoacyl-tRNA synthetase family. ProS type 3 subfamily. Homodimer.

The protein localises to the cytoplasm. The catalysed reaction is tRNA(Pro) + L-proline + ATP = L-prolyl-tRNA(Pro) + AMP + diphosphate. Functionally, catalyzes the attachment of proline to tRNA(Pro) in a two-step reaction: proline is first activated by ATP to form Pro-AMP and then transferred to the acceptor end of tRNA(Pro). This Rhodococcus jostii (strain RHA1) protein is Proline--tRNA ligase 2.